Consider the following 356-residue polypeptide: UDP-3-O-acylglucosamine N-acyltransferase (356 aa).

Catalysis depends on histidine 242, which acts as the Proton acceptor.

It belongs to the transferase hexapeptide repeat family. LpxD subfamily. Homotrimer.

It carries out the reaction a UDP-3-O-[(3R)-3-hydroxyacyl]-alpha-D-glucosamine + a (3R)-hydroxyacyl-[ACP] = a UDP-2-N,3-O-bis[(3R)-3-hydroxyacyl]-alpha-D-glucosamine + holo-[ACP] + H(+). Its pathway is bacterial outer membrane biogenesis; LPS lipid A biosynthesis. In terms of biological role, catalyzes the N-acylation of UDP-3-O-acylglucosamine using 3-hydroxyacyl-ACP as the acyl donor. Is involved in the biosynthesis of lipid A, a phosphorylated glycolipid that anchors the lipopolysaccharide to the outer membrane of the cell. This Acinetobacter baumannii (strain ACICU) protein is UDP-3-O-acylglucosamine N-acyltransferase.